A 535-amino-acid chain; its full sequence is Flavin-containing monooxygenase iboF (535 aa).

The first 24 residues, 1-24 (MFSLRPTALVSLSVVLFSIQETLS), serve as a signal peptide directing secretion. 60-65 (GAGPSG) is an FAD binding site. Residues Asn134, Asn243, and Asn300 are each glycosylated (N-linked (GlcNAc...) asparagine). 307-312 (GAAASG) lines the NADP(+) pocket. N-linked (GlcNAc...) asparagine glycosylation is found at Asn356, Asn382, and Asn410.

This sequence belongs to the FMO family. It depends on FAD as a cofactor.

It participates in secondary metabolite biosynthesis. Functionally, flavin-containing monooxygenase; part of the gene cluster that mediates the biosynthesis of the psychoactive metabolites ibotenic acid and muscimol. The first committed step is glutamate hydroxylation by the 2-oxoglutarate-dependent dioxygenase iboH, and the last step is decarboxylation of ibotenic acid to muscimol by the decarboxylase iboD. The order of the intermediate reactions is somewhat ambiguous. IboA likely activates the carboxylic acid at position 5 to introduce an amide bond, and the flavin monooxygenase iboF generates the N-O bond. There are several options for the latter step. One option is that iboF directly hydroxylates the amide nitrogen formed by iboA to produce a hydroxamic acid species. Another option is that iboF hydroxylates an external N-containing compound, whose resulting N-O bond is subsequently introduced into the hydroxyglutamate scaffold. The paralogous PLP-dependent cystathionine gamma-synthase-like enzymes iboG1 and iboG2 are likely involved in substitution of the OH group at position 3 by the O-N moiety. The first cyclic intermediate is most probably tricholomic acid which is likely desaturated to ibotenic acid by the cytochrome P450 monooxygenase iboC. The polypeptide is Flavin-containing monooxygenase iboF (Amanita muscaria (strain Koide BX008)).